The primary structure comprises 268 residues: 4-hydroxy-tetrahydrodipicolinate reductase (268 aa).

Residues Gly-7–Met-12 and Glu-33 contribute to the NAD(+) site. Arg-34 provides a ligand contact to NADP(+). NAD(+) contacts are provided by residues Gly-97–Thr-99 and Ser-121–Met-124. The active-site Proton donor/acceptor is His-155. His-156 contributes to the (S)-2,3,4,5-tetrahydrodipicolinate binding site. The active-site Proton donor is Lys-159. Gly-165–Thr-166 is a (S)-2,3,4,5-tetrahydrodipicolinate binding site.

It belongs to the DapB family.

The protein localises to the cytoplasm. It catalyses the reaction (S)-2,3,4,5-tetrahydrodipicolinate + NAD(+) + H2O = (2S,4S)-4-hydroxy-2,3,4,5-tetrahydrodipicolinate + NADH + H(+). It carries out the reaction (S)-2,3,4,5-tetrahydrodipicolinate + NADP(+) + H2O = (2S,4S)-4-hydroxy-2,3,4,5-tetrahydrodipicolinate + NADPH + H(+). It functions in the pathway amino-acid biosynthesis; L-lysine biosynthesis via DAP pathway; (S)-tetrahydrodipicolinate from L-aspartate: step 4/4. Functionally, catalyzes the conversion of 4-hydroxy-tetrahydrodipicolinate (HTPA) to tetrahydrodipicolinate. The protein is 4-hydroxy-tetrahydrodipicolinate reductase of Brucella abortus (strain 2308).